A 120-amino-acid polypeptide reads, in one-letter code: Ribonuclease P protein component (120 aa).

It belongs to the RnpA family. As to quaternary structure, consists of a catalytic RNA component (M1 or rnpB) and a protein subunit.

The enzyme catalyses Endonucleolytic cleavage of RNA, removing 5'-extranucleotides from tRNA precursor.. Its function is as follows. RNaseP catalyzes the removal of the 5'-leader sequence from pre-tRNA to produce the mature 5'-terminus. It can also cleave other RNA substrates such as 4.5S RNA. The protein component plays an auxiliary but essential role in vivo by binding to the 5'-leader sequence and broadening the substrate specificity of the ribozyme. This Latilactobacillus sakei subsp. sakei (strain 23K) (Lactobacillus sakei subsp. sakei) protein is Ribonuclease P protein component.